The sequence spans 354 residues: Protein RecA (354 aa).

Residue 75 to 82 (GPESSGKT) coordinates ATP.

The protein belongs to the RecA family.

It is found in the cytoplasm. In terms of biological role, can catalyze the hydrolysis of ATP in the presence of single-stranded DNA, the ATP-dependent uptake of single-stranded DNA by duplex DNA, and the ATP-dependent hybridization of homologous single-stranded DNAs. It interacts with LexA causing its activation and leading to its autocatalytic cleavage. The chain is Protein RecA from Cupriavidus taiwanensis (strain DSM 17343 / BCRC 17206 / CCUG 44338 / CIP 107171 / LMG 19424 / R1) (Ralstonia taiwanensis (strain LMG 19424)).